A 748-amino-acid chain; its full sequence is Photosystem I P700 chlorophyll a apoprotein A1 (748 aa).

The next 8 membrane-spanning stretches (helical) occupy residues 70–93 (VFSAHFGQIAVILIWLSGMYFHGA), 156–179 (LYSTAIGGLVLATLTLIGGWYHYH), 195–219 (LNHHLAGLIGLGSLSWAGHQIHVSL), 291–309 (TAHHHLAIAVLFIIAGHQY), 346–369 (WHAQLALNLALFGSLTIIVAHHMY), 385–411 (LSLFTHHMWIGGFLVTGAAAHAAIFLV), 433–455 (AIISHLNWVCIFLGFHSFGLYIH), and 530–548 (FLVHHIHAFTIHVTVLILL). The [4Fe-4S] cluster site is built by C572 and C581. A run of 2 helical transmembrane segments spans residues 588 to 609 (HVFLGLFWMYNSISVVIFHFSW) and 662 to 684 (LSAYGLIFLGAHFVWAFSLMFLF). H673 contacts chlorophyll a'. Positions 681 and 689 each coordinate chlorophyll a. W690 provides a ligand contact to phylloquinone. Residues 722–742 (AVGVAHYLLGGIATTWAFFLA) traverse the membrane as a helical segment.

The protein belongs to the PsaA/PsaB family. As to quaternary structure, the PsaA/B heterodimer binds the P700 chlorophyll special pair and subsequent electron acceptors. PSI consists of a core antenna complex that captures photons, and an electron transfer chain that converts photonic excitation into a charge separation. The eukaryotic PSI reaction center is composed of at least 11 subunits. P700 is a chlorophyll a/chlorophyll a' dimer, A0 is one or more chlorophyll a, A1 is one or both phylloquinones and FX is a shared 4Fe-4S iron-sulfur center. serves as cofactor.

It localises to the plastid. It is found in the chloroplast thylakoid membrane. It carries out the reaction reduced [plastocyanin] + hnu + oxidized [2Fe-2S]-[ferredoxin] = oxidized [plastocyanin] + reduced [2Fe-2S]-[ferredoxin]. In terms of biological role, psaA and PsaB bind P700, the primary electron donor of photosystem I (PSI), as well as the electron acceptors A0, A1 and FX. PSI is a plastocyanin-ferredoxin oxidoreductase, converting photonic excitation into a charge separation, which transfers an electron from the donor P700 chlorophyll pair to the spectroscopically characterized acceptors A0, A1, FX, FA and FB in turn. Oxidized P700 is reduced on the lumenal side of the thylakoid membrane by plastocyanin. This Chaetosphaeridium globosum (Charophycean green alga) protein is Photosystem I P700 chlorophyll a apoprotein A1.